Reading from the N-terminus, the 210-residue chain is Small ribosomal subunit protein uS5 (210 aa).

Residues 1 to 11 are compositionally biased toward polar residues; that stretch reads MTQPNTQTTPN. Positions 1–56 are disordered; sequence MTQPNTQTTPNDVPAAAEGQHQEQQQQQRRGGGRERRGGGRRGDRRGQERDSEWQE. Positions 18–29 are enriched in low complexity; that stretch reads EGQHQEQQQQQR. Residues 32–56 show a composition bias toward basic and acidic residues; that stretch reads GGRERRGGGRRGDRRGQERDSEWQE. In terms of domain architecture, S5 DRBM spans 54 to 117; it reads WQERVVQIRR…ADGKKHLVKV (64 aa).

It belongs to the universal ribosomal protein uS5 family. Part of the 30S ribosomal subunit. Contacts proteins S4 and S8.

With S4 and S12 plays an important role in translational accuracy. Functionally, located at the back of the 30S subunit body where it stabilizes the conformation of the head with respect to the body. The chain is Small ribosomal subunit protein uS5 from Prochlorococcus marinus (strain MIT 9303).